The primary structure comprises 276 residues: Methylesterase 17 (276 aa).

The AB hydrolase-1 domain maps to 19–138 (PHFVLIHGMS…TDEDMKDGVP (120 aa)). The Acyl-ester intermediate role is filled by Ser-95. Active-site charge relay system residues include Asp-225 and His-252.

This sequence belongs to the AB hydrolase superfamily. Methylesterase family. Expressed in several tissues of seedlings and adult plants, with a higher relative level of expression in the seedling shoot apex and the adult stem.

The catalysed reaction is methyl (indol-3-yl)acetate + H2O = (indol-3-yl)acetate + methanol + H(+). Its pathway is plant hormone biosynthesis. In terms of biological role, methylesterase that efficiently and specifically hydrolyzes methyl indole-3-acetic acid (MeIAA) to IAA (auxin). MeIAA is believed to be an inactive form of auxin that needs to be demethylated to exert a biological effect. This is Methylesterase 17 from Arabidopsis thaliana (Mouse-ear cress).